A 123-amino-acid polypeptide reads, in one-letter code: Small ribosomal subunit protein uS12 (123 aa).

The tract at residues 1–32 is disordered; sequence MPTIQQLVRKGRKTKVSKNKTPALKGSPQRRG. The segment covering 9–18 has biased composition (basic residues); that stretch reads RKGRKTKVSK. Asp-89 carries the post-translational modification 3-methylthioaspartic acid.

Belongs to the universal ribosomal protein uS12 family. Part of the 30S ribosomal subunit. Contacts proteins S8 and S17. May interact with IF1 in the 30S initiation complex.

In terms of biological role, with S4 and S5 plays an important role in translational accuracy. Its function is as follows. Interacts with and stabilizes bases of the 16S rRNA that are involved in tRNA selection in the A site and with the mRNA backbone. Located at the interface of the 30S and 50S subunits, it traverses the body of the 30S subunit contacting proteins on the other side and probably holding the rRNA structure together. The combined cluster of proteins S8, S12 and S17 appears to hold together the shoulder and platform of the 30S subunit. The sequence is that of Small ribosomal subunit protein uS12 from Thermobifida fusca (strain YX).